Here is a 1385-residue protein sequence, read N- to C-terminus: Formin-like protein 7 (1385 aa).

The Phosphatase tensin-type domain occupies 9–193 (FKKPPDGLLL…RYVSMRNVVP (185 aa)). C126 serves as the catalytic Phosphocysteine intermediate. Positions 199-358 (DRALTLDSVI…KASSTSQGNI (160 aa)) constitute a C2 tensin-type domain. 4 disordered regions span residues 345–367 (IPQR…DGSE), 427–510 (APSR…LTVN), 649–989 (STAA…PLHW), and 1362–1385 (KRAQ…LLEP). Polar residues-rich tracts occupy residues 349 to 358 (KASSTSQGNI), 448 to 470 (TSAS…SPVQ), and 483 to 510 (PAQS…LTVN). Pro residues-rich tracts occupy residues 654–665 (PPLPPPLPPPLK) and 689–701 (TQPP…PPIQ). Over residues 702–718 (PTLISNSIYSSTSSVVS) the composition is skewed to low complexity. 3 stretches are compositionally biased toward pro residues: residues 727–758 (PAPP…PPSA), 766–795 (PVPP…PPAA), and 802–815 (AVPP…PPMV). The segment covering 855 to 867 (QTSSLVSSLPSSR) has biased composition (low complexity). Pro residues-rich tracts occupy residues 895–906 (SAPPAPPLPPPK) and 921–932 (WPPPPPPGPPPK). Residues 933-942 (NSSNSLPSKG) show a composition bias toward low complexity. One can recognise an FH2 domain in the interval 974 to 1372 (RPNQSSKRTP…RAQMEAEKEK (399 aa)).

This sequence belongs to the formin-like family. Class-II subfamily.

This chain is Formin-like protein 7 (FH7), found in Oryza sativa subsp. japonica (Rice).